We begin with the raw amino-acid sequence, 136 residues long: 14 kDa fusion protein (136 aa).

The segment at 22–50 (EAWTTSRSSTGSANPSASRKPARYPRIHA) is disordered. Over residues 24–38 (WTTSRSSTGSANPSA) the composition is skewed to polar residues. Asn-86 carries N-linked (GlcNAc...) asparagine; by host glycosylation.

The protein belongs to the poxviruses fusion protein family. As to quaternary structure, homotrimer, covalently linked.

It localises to the virion membrane. This protein appears to play an important role in virus penetration at the level of cell fusion. The N-terminal proximal region is essential for fusion ability. Essential in fusing the outermost of the two Golgi-derived membranes enveloping the virus with the plasma membrane, and in its subsequent release extracellularly. The protein is 14 kDa fusion protein of Vaccinia virus (strain WR 65-16) (VACV).